Reading from the N-terminus, the 196-residue chain is Large ribosomal subunit protein eL15 (196 aa).

Disordered stretches follow at residues 72 to 93 (SARK…TRIT) and 163 to 196 (GLTG…GKGK).

Belongs to the eukaryotic ribosomal protein eL15 family. As to quaternary structure, part of the 50S ribosomal subunit. Interacts with protein L7Ae and weakly with L44e.

The polypeptide is Large ribosomal subunit protein eL15 (rpl15e) (Haloarcula marismortui (strain ATCC 43049 / DSM 3752 / JCM 8966 / VKM B-1809) (Halobacterium marismortui)).